Reading from the N-terminus, the 149-residue chain is MRIIVDADACPGRNLIEKAAIENSVEVIMYCDINHELKSDYSEVRVVDSGFQSVDMKIINEAKENDIIVTQDYGVAAMVLGRKAFAISPKGYIYDDDNIDRLLFERHLSAKARRGGKKTFNPKKRTDEDNLRLYNNILKLINKAKEKSN.

This sequence belongs to the UPF0178 family.

This is UPF0178 protein NT01CX_0440 from Clostridium novyi (strain NT).